The following is a 578-amino-acid chain: Arginine--tRNA ligase (578 aa).

A 'HIGH' region motif is present at residues 127–137 (PNLAKEMHVGH).

This sequence belongs to the class-I aminoacyl-tRNA synthetase family. Monomer.

The protein localises to the cytoplasm. The catalysed reaction is tRNA(Arg) + L-arginine + ATP = L-arginyl-tRNA(Arg) + AMP + diphosphate. The polypeptide is Arginine--tRNA ligase (Pseudomonas fluorescens (strain ATCC BAA-477 / NRRL B-23932 / Pf-5)).